A 61-amino-acid polypeptide reads, in one-letter code: Protein CopA/IncA (61 aa).

Controls the copy number in gene replication. The sequence is that of Protein CopA/IncA (copA) from Escherichia coli.